Reading from the N-terminus, the 222-residue chain is Eukaryotic translation initiation factor 4E-2 (222 aa).

Basic and acidic residues predominate over residues 1–20 (MVDEVEKPVSLEESKTNTRE). Positions 1 to 35 (MVDEVEKPVSLEESKTNTREVEEEGEIVGESDDTM) are disordered. The segment covering 21 to 33 (VEEEGEIVGESDD) has biased composition (acidic residues). EIF4G-binding stretches follow at residues 47–50 (HALE) and 57–93 (FDNPSGKSKQAAWGSSIRPIYTFSTVEDFWSVYNNIH). MRNA is bound by residues 65-70 (KQAAWG), Lys97, and 115-116 (WE). Cys120 and Cys158 are oxidised to a cystine. The tract at residues 141 to 150 (YTLLAMIGEQ) is EIF4G-binding. MRNA is bound by residues 165-170 (RVRQEK) and 210-214 (KKLDR).

The protein belongs to the eukaryotic initiation factor 4E family. As to quaternary structure, EIF4F is a multi-subunit complex, the composition of which varies with external and internal environmental conditions. It is composed of at least EIF4A, EIF4E and EIF4G. EIF4E is also known to interact with other partners. In higher plants two isoforms of EIF4F have been identified, named isoform EIF4F and isoform EIF(iso)4F. Isoform EIF4F has subunits p220 and p26, whereas isoform EIF(iso)4F has subunits p82 and p28. In terms of assembly, (Microbial infection) Interacts with potyvirus viral genome-linked protein (VPg); this interaction is possible in susceptible hosts but impaired in resistant plants. According to the redox status, the Cys-120-Cys-158 disulfide bridge may have a role in regulating protein function by affecting its ability to bind capped mRNA. In terms of tissue distribution, strongly expressed in susceptible plants but not in resistant ones.

It localises to the nucleus. Its subcellular location is the cytoplasm. Functionally, component of the protein complex eIF4F, which is involved in the recognition of the mRNA cap, ATP-dependent unwinding of 5'-terminal secondary structure and recruitment of mRNA to the ribosome. Recognizes and binds the 7-methylguanosine-containing mRNA cap during an early step in the initiation of protein synthesis and facilitates ribosome binding by inducing the unwinding of the mRNAs secondary structures. Key component of recessive resistance to potyviruses. (Microbial infection) Susceptibility host factor required for viral infection (e.g. potato virus Y (PVY) and pepper mottle virus (PepMoV)) by recruiting viral RNAs to the host ribosomal complex via an interaction with viral genome-linked protein (VPg). In Nicotiana tabacum (Common tobacco), this protein is Eukaryotic translation initiation factor 4E-2.